Reading from the N-terminus, the 261-residue chain is 5'-nucleotidase SurE (261 aa).

Asp-8, Asp-9, Ser-43, and Asn-96 together coordinate a divalent metal cation.

This sequence belongs to the SurE nucleotidase family. Requires a divalent metal cation as cofactor.

The protein resides in the cytoplasm. The enzyme catalyses a ribonucleoside 5'-phosphate + H2O = a ribonucleoside + phosphate. Nucleotidase that shows phosphatase activity on nucleoside 5'-monophosphates. In Cereibacter sphaeroides (strain ATCC 17023 / DSM 158 / JCM 6121 / CCUG 31486 / LMG 2827 / NBRC 12203 / NCIMB 8253 / ATH 2.4.1.) (Rhodobacter sphaeroides), this protein is 5'-nucleotidase SurE.